The chain runs to 55 residues: ATP synthase F(0) complex subunit 8 (55 aa).

The helical transmembrane segment at 4 to 24 (LNPAPWFAILVFSWLVFLTVI) threads the bilayer. The segment at 34-55 (TNEPTSQSTEKAKPEPWNWPWH) is disordered.

The protein belongs to the ATPase protein 8 family. Component of the ATP synthase complex composed at least of ATP5F1A/subunit alpha, ATP5F1B/subunit beta, ATP5MC1/subunit c (homooctomer), MT-ATP6/subunit a, MT-ATP8/subunit 8, ATP5ME/subunit e, ATP5MF/subunit f, ATP5MG/subunit g, ATP5MK/subunit k, ATP5MJ/subunit j, ATP5F1C/subunit gamma, ATP5F1D/subunit delta, ATP5F1E/subunit epsilon, ATP5PF/subunit F6, ATP5PB/subunit b, ATP5PD/subunit d, ATP5PO/subunit OSCP. ATP synthase complex consists of a soluble F(1) head domain (subunits alpha(3) and beta(3)) - the catalytic core - and a membrane F(0) domain - the membrane proton channel (subunits c, a, 8, e, f, g, k and j). These two domains are linked by a central stalk (subunits gamma, delta, and epsilon) rotating inside the F1 region and a stationary peripheral stalk (subunits F6, b, d, and OSCP).

The protein localises to the mitochondrion membrane. Functionally, subunit 8, of the mitochondrial membrane ATP synthase complex (F(1)F(0) ATP synthase or Complex V) that produces ATP from ADP in the presence of a proton gradient across the membrane which is generated by electron transport complexes of the respiratory chain. ATP synthase complex consist of a soluble F(1) head domain - the catalytic core - and a membrane F(1) domain - the membrane proton channel. These two domains are linked by a central stalk rotating inside the F(1) region and a stationary peripheral stalk. During catalysis, ATP synthesis in the catalytic domain of F(1) is coupled via a rotary mechanism of the central stalk subunits to proton translocation. In vivo, can only synthesize ATP although its ATP hydrolase activity can be activated artificially in vitro. Part of the complex F(0) domain. The polypeptide is ATP synthase F(0) complex subunit 8 (Oncorhynchus mykiss (Rainbow trout)).